A 323-amino-acid polypeptide reads, in one-letter code: Dehydrogenase/reductase SDR family member 7B (323 aa).

Residues 1-17 (MISPSFRKGMLKERVMD) lie on the Cytoplasmic side of the membrane. A helical; Signal-anchor for type II membrane protein membrane pass occupies residues 18–38 (LASQTTILPLLFGCLGIFSLF). Residues 39 to 323 (RLLQRIRSKA…ARKERKSKSS (285 aa)) lie on the Lumenal side of the membrane. Ser-62 and Leu-64 together coordinate NAD(+). Substrate is bound at residue Ser-192. NAD(+)-binding residues include Tyr-205, Lys-209, and Thr-240. Tyr-205 functions as the Proton acceptor in the catalytic mechanism.

The protein belongs to the short-chain dehydrogenases/reductases (SDR) family.

It localises to the endoplasmic reticulum membrane. Functionally, putative oxidoreductase. The chain is Dehydrogenase/reductase SDR family member 7B from Mus musculus (Mouse).